A 376-amino-acid chain; its full sequence is UDP-N-acetylglucosamine 2-epimerase (376 aa).

Substrate contacts are provided by residues arginine 10, lysine 15, aspartate 95, glutamate 117, histidine 213, glutamine 271, phenylalanine 276, 290 to 292 (SGG), glutamate 296, and arginine 313.

Belongs to the UDP-N-acetylglucosamine 2-epimerase family. Homodimer.

It localises to the cytoplasm. The enzyme catalyses UDP-N-acetyl-alpha-D-glucosamine = UDP-N-acetyl-alpha-D-mannosamine. It participates in bacterial outer membrane biogenesis; enterobacterial common antigen biosynthesis. Its function is as follows. Catalyzes the reversible epimerization at C-2 of UDP-N-acetylglucosamine (UDP-GlcNAc) and thereby provides bacteria with UDP-N-acetylmannosamine (UDP-ManNAc), the activated donor of ManNAc residues. The sequence is that of UDP-N-acetylglucosamine 2-epimerase from Salmonella typhimurium (strain LT2 / SGSC1412 / ATCC 700720).